Here is a 580-residue protein sequence, read N- to C-terminus: FAD-dependent monooxygenase DEP4 (580 aa).

An FAD-binding site is contributed by 47-50; that stretch reads VWSK. 58–60 serves as a coordination point for NADP(+); it reads FAQ. Residue V112 participates in FAD binding. NADP(+) is bound by residues 186–205, 222–223, and 354–355; these read VGRS…AGKK, AP, and DI. M473 lines the FAD pocket.

It belongs to the FAD-binding monooxygenase family. Requires FAD as cofactor.

It participates in polyketide biosynthesis. In terms of biological role, part of the gene cluster that mediates the biosynthesis of depudecin, a highly oxidized eleven-carbon linear polyketide that acts as a histone deacetylase (HDAC) inhibitor and makes a small contribution to pathogenesis. The reducing polyketide synthase DEP5 is the central enzyme in depudecin biosynthesis by yielding the backbone polyketide chain. The monooxygenases DEP2 and DEP4, as well as the uncharacterized protein DEP1, then act as tailoring enzymes to modify the intermediate polyketide chain into depudecin. In Fusarium langsethiae, this protein is FAD-dependent monooxygenase DEP4.